Here is a 101-residue protein sequence, read N- to C-terminus: Protein RnfH (101 aa).

Belongs to the UPF0125 (RnfH) family.

This Pseudomonas aeruginosa (strain LESB58) protein is Protein RnfH.